The chain runs to 323 residues: Cyclin-H (323 aa).

Serine 5 is subject to Phosphoserine; by CDK8. Serine 132 is modified (phosphoserine). The segment at 295–323 (KGYEDDDYVSKKPKQEEEEWTDDDLVDSL) is disordered. Serine 304 bears the Phosphoserine; by CDK8 mark. Residues 310–323 (EEEEWTDDDLVDSL) are compositionally biased toward acidic residues. Position 315 is a phosphothreonine (threonine 315). Serine 322 is modified (phosphoserine).

This sequence belongs to the cyclin family. Cyclin C subfamily. Associates primarily with CDK7 and MAT1 to form the CAK complex. CAK can further associate with the core-TFIIH to form the TFIIH basal transcription factor. Expressed in both the germinal and somatic cells of the testis.

It is found in the nucleus. In terms of biological role, regulates CDK7, the catalytic subunit of the CDK-activating kinase (CAK) enzymatic complex. CAK activates the cyclin-associated kinases CDK1, CDK2, CDK4 and CDK6 by threonine phosphorylation. CAK complexed to the core-TFIIH basal transcription factor activates RNA polymerase II by serine phosphorylation of the repetitive C-terminal domain (CTD) of its large subunit (POLR2A), allowing its escape from the promoter and elongation of the transcripts. Involved in cell cycle control and in RNA transcription by RNA polymerase II. Its expression and activity are constant throughout the cell cycle. The polypeptide is Cyclin-H (Ccnh) (Mus musculus (Mouse)).